Here is a 365-residue protein sequence, read N- to C-terminus: 4-hydroxy-3-methylbut-2-en-1-yl diphosphate synthase (flavodoxin) (365 aa).

C265, C268, C300, and E307 together coordinate [4Fe-4S] cluster.

This sequence belongs to the IspG family. It depends on [4Fe-4S] cluster as a cofactor.

The catalysed reaction is (2E)-4-hydroxy-3-methylbut-2-enyl diphosphate + oxidized [flavodoxin] + H2O + 2 H(+) = 2-C-methyl-D-erythritol 2,4-cyclic diphosphate + reduced [flavodoxin]. The protein operates within isoprenoid biosynthesis; isopentenyl diphosphate biosynthesis via DXP pathway; isopentenyl diphosphate from 1-deoxy-D-xylulose 5-phosphate: step 5/6. In terms of biological role, converts 2C-methyl-D-erythritol 2,4-cyclodiphosphate (ME-2,4cPP) into 1-hydroxy-2-methyl-2-(E)-butenyl 4-diphosphate. The chain is 4-hydroxy-3-methylbut-2-en-1-yl diphosphate synthase (flavodoxin) from Bacillus mycoides (strain KBAB4) (Bacillus weihenstephanensis).